We begin with the raw amino-acid sequence, 65 residues long: uncharacterized protein (65 aa).

The segment at 24 to 65 (NNNNNNNNNNNNNNNNNNNNNNNNNNNNNNNKNNKNNNKNND) is disordered.

This is an uncharacterized protein from Dictyostelium discoideum (Social amoeba).